The chain runs to 290 residues: Putative phosphoenolpyruvate synthase regulatory protein (290 aa).

170–177 serves as a coordination point for ADP; it reads GVSRCGKT.

This sequence belongs to the pyruvate, phosphate/water dikinase regulatory protein family. PSRP subfamily.

The catalysed reaction is [pyruvate, water dikinase] + ADP = [pyruvate, water dikinase]-phosphate + AMP + H(+). The enzyme catalyses [pyruvate, water dikinase]-phosphate + phosphate + H(+) = [pyruvate, water dikinase] + diphosphate. Bifunctional serine/threonine kinase and phosphorylase involved in the regulation of the phosphoenolpyruvate synthase (PEPS) by catalyzing its phosphorylation/dephosphorylation. The polypeptide is Putative phosphoenolpyruvate synthase regulatory protein (ydiA) (Enterobacter agglomerans (Erwinia herbicola)).